Here is a 1490-residue protein sequence, read N- to C-terminus: ABC transporter CDR4 (1490 aa).

Residues Met-1–Lys-12 are compositionally biased toward polar residues. Disordered regions lie at residues Met-1–Gln-26 and Leu-53–Lys-75. Residues Met-1–Ser-516 are Cytoplasmic-facing. Positions Ser-58–Glu-67 are enriched in basic and acidic residues. One can recognise an ABC transporter 1 domain in the interval Pro-151–Gln-407. Helical transmembrane passes span Ile-517–Tyr-537, Ala-551–Leu-571, Leu-601–Phe-621, Gly-626–Phe-646, Ala-659–Pro-679, and Phe-767–Ile-787. The Cytoplasmic portion of the chain corresponds to Asn-788–Ser-1182. Residues Phe-846–Ala-1090 enclose the ABC transporter 2 domain. Gly-882–Thr-889 contributes to the ATP binding site. Helical transmembrane passes span Tyr-1183–Tyr-1203, Phe-1217–Phe-1237, and Ile-1268–Leu-1288. Asn-1291 is a glycosylation site (N-linked (GlcNAc...) asparagine). The next 3 membrane-spanning stretches (helical) occupy residues Phe-1304 to Ile-1324, Ala-1333 to Thr-1353, and Phe-1370 to Ala-1390. N-linked (GlcNAc...) asparagine glycosylation is present at Asn-1424. Residues Ile-1455 to Phe-1475 traverse the membrane as a helical segment.

This sequence belongs to the ABC transporter superfamily. ABCG family. PDR (TC 3.A.1.205) subfamily.

The protein localises to the membrane. In Candida albicans (Yeast), this protein is ABC transporter CDR4 (CDR4).